The chain runs to 392 residues: Membrane cofactor protein (392 aa).

A signal peptide spans 1 to 34; sequence MEPPGRRECPFPSWRFPGLLLAAMVLLLYSFSDA. 8 cysteine pairs are disulfide-bonded: C35–C80, C64–C94, C99–C141, C127–C157, C162–C210, C191–C223, C228–C270, and C256–C283. 4 consecutive Sushi domains span residues 35 to 96, 97 to 159, 160 to 225, and 226 to 285; these read CEEP…ACYR, ETCP…ICEK, VLCT…ECKV, and VKCR…KCLK. Residues 35–343 are Extracellular-facing; sequence CEEPPTFEAM…PEEGILDSLD (309 aa). N-linked (GlcNAc...) asparagine glycans are attached at residues N83 and N114. O-linked (GalNAc...) threonine glycosylation is present at T163. N-linked (GlcNAc...) asparagine glycosylation occurs at N273. 2 O-linked (GalNAc...) serine glycosylation sites follow: S290 and S291. Over residues 291 to 315 the composition is skewed to low complexity; that stretch reads STKPPALSHSVSTSSTTKSPASSAS. Residues 291-328 are disordered; sequence STKPPALSHSVSTSSTTKSPASSASGPRPTYKPPVSNY. The O-linked (GalNAc...) threonine glycan is linked to T292. 3 O-linked (GalNAc...) serine glycosylation sites follow: S298, S300, and S302. T303 is a glycosylation site (O-linked (GalNAc...) threonine). O-linked (GalNAc...) serine glycans are attached at residues S304 and S305. 2 O-linked (GalNAc...) threonine glycosylation sites follow: T306 and T307. Residues S309, S312, S313, and S315 are each glycosylated (O-linked (GalNAc...) serine). T320 carries an O-linked (GalNAc...) threonine glycan. Y321 carries the phosphotyrosine modification. An O-linked (GalNAc...) serine glycan is attached at S326. Phosphotyrosine occurs at positions 340, 354, 355, 369, 370, and 384. The helical transmembrane segment at 344-366 threads the bilayer; sequence VWVIAVIVIAIVVGVAVICVVPY. The Cytoplasmic segment spans residues 367 to 392; the sequence is RYLQRRKKKGTYLTDETHREVKFTSL.

In terms of assembly, interacts with C3b. Interacts with C4b. Interacts with moesin/MSN. (Microbial infection) Interacts (via N-terminus) with measles virus H protein; this interaction allows attachment and viral entry of vaccine and laboratory-adapted strains. As to quaternary structure, (Microbial infection) Interacts with human herpesvirus 6 GH protein. In terms of assembly, (Microbial infection) Interacts with human adenovirus B/D fiber protein. (Microbial infection) Binds to Streptococcus pyogenes M protein and to type IV pili from Neisseria. Post-translationally, N-glycosylated on Asn-83; Asn-114 and Asn-273 in most tissues, but probably less N-glycosylated in testis. N-glycosylation on Asn-114 and Asn-273 is required for cytoprotective function. N-glycosylation on Asn-114 is required for Measles virus binding. N-glycosylation on Asn-273 is required for Neisseria binding. N-glycosylation is not required for human adenovirus binding. In terms of processing, extensively O-glycosylated in the Ser/Thr-rich domain. O-glycosylation is required for Neisseria binding but not for Measles virus or human adenovirus binding. In epithelial cells, isoforms B/D/F/H/J/L/3 are phosphorylated by YES1 in response to infection by Neisseria gonorrhoeae; which promotes infectivity. In T-cells, these isoforms may be phosphorylated by LCK. In terms of tissue distribution, expressed by all cells except erythrocytes.

The protein localises to the cytoplasmic vesicle. The protein resides in the secretory vesicle. Its subcellular location is the acrosome inner membrane. Its function is as follows. Acts as a cofactor for complement factor I, a serine protease which protects autologous cells against complement-mediated injury by cleaving C3b and C4b deposited on host tissue. May be involved in the fusion of the spermatozoa with the oocyte during fertilization. Also acts as a costimulatory factor for T-cells which induces the differentiation of CD4+ into T-regulatory 1 cells. T-regulatory 1 cells suppress immune responses by secreting interleukin-10, and therefore are thought to prevent autoimmunity. In terms of biological role, (Microbial infection) A number of viral and bacterial pathogens seem to bind MCP in order to exploit its immune regulation property and directly induce an immunosuppressive phenotype in T-cells. Functionally, (Microbial infection) Acts as a receptor for Adenovirus subgroup B2 and Ad3. (Microbial infection) Acts as a receptor for cultured Measles virus. Its function is as follows. (Microbial infection) Acts as a receptor for Herpesvirus 6/HHV-6. In terms of biological role, (Microbial infection) May act as a receptor for pathogenic bacteria Neisseria and Streptococcus pyogenes. This Homo sapiens (Human) protein is Membrane cofactor protein (CD46).